A 261-amino-acid polypeptide reads, in one-letter code: uncharacterized protein (261 aa).

A signal peptide spans 1-22 (MRYLKKVTIYISLLILTIFIGG). Residue cysteine 23 is the site of N-palmitoyl cysteine attachment. Residue cysteine 23 is the site of S-diacylglycerol cysteine attachment.

The protein belongs to the staphylococcal tandem lipoprotein family.

The protein localises to the cell membrane. This is an uncharacterized protein from Staphylococcus epidermidis (strain ATCC 35984 / DSM 28319 / BCRC 17069 / CCUG 31568 / BM 3577 / RP62A).